The sequence spans 312 residues: Glycine--tRNA ligase alpha subunit (312 aa).

The protein belongs to the class-II aminoacyl-tRNA synthetase family. Tetramer of two alpha and two beta subunits.

It localises to the cytoplasm. It catalyses the reaction tRNA(Gly) + glycine + ATP = glycyl-tRNA(Gly) + AMP + diphosphate. This chain is Glycine--tRNA ligase alpha subunit, found in Nostoc punctiforme (strain ATCC 29133 / PCC 73102).